Consider the following 620-residue polypeptide: 1-deoxy-D-xylulose-5-phosphate synthase (620 aa).

Thiamine diphosphate-binding positions include His-80 and 121–123; that span reads GHS. Mg(2+) is bound at residue Asp-152. Thiamine diphosphate is bound by residues 153-154, Asn-181, Tyr-288, and Glu-370; that span reads GA. Asn-181 contacts Mg(2+).

Belongs to the transketolase family. DXPS subfamily. In terms of assembly, homodimer. Mg(2+) serves as cofactor. The cofactor is thiamine diphosphate.

It catalyses the reaction D-glyceraldehyde 3-phosphate + pyruvate + H(+) = 1-deoxy-D-xylulose 5-phosphate + CO2. Its pathway is metabolic intermediate biosynthesis; 1-deoxy-D-xylulose 5-phosphate biosynthesis; 1-deoxy-D-xylulose 5-phosphate from D-glyceraldehyde 3-phosphate and pyruvate: step 1/1. Functionally, catalyzes the acyloin condensation reaction between C atoms 2 and 3 of pyruvate and glyceraldehyde 3-phosphate to yield 1-deoxy-D-xylulose-5-phosphate (DXP). This Escherichia coli (strain SMS-3-5 / SECEC) protein is 1-deoxy-D-xylulose-5-phosphate synthase.